A 133-amino-acid polypeptide reads, in one-letter code: Large ribosomal subunit protein bL12 (133 aa).

The disordered stretch occupies residues 98 to 118; the sequence is DMVESTPKPIKEGTGKEDAED.

The protein belongs to the bacterial ribosomal protein bL12 family. Homodimer. Part of the ribosomal stalk of the 50S ribosomal subunit. Forms a multimeric L10(L12)X complex, where L10 forms an elongated spine to which 2 to 4 L12 dimers bind in a sequential fashion. Binds GTP-bound translation factors.

Functionally, forms part of the ribosomal stalk which helps the ribosome interact with GTP-bound translation factors. Is thus essential for accurate translation. This chain is Large ribosomal subunit protein bL12, found in Crocosphaera subtropica (strain ATCC 51142 / BH68) (Cyanothece sp. (strain ATCC 51142)).